The following is a 468-amino-acid chain: Probable 1,4-beta-D-glucan cellobiohydrolase C (468 aa).

The signal sequence occupies residues 1–18 (MGRVSSLALALLLPAVQA). The CBM1 domain occupies 19 to 54 (QQTLWGQCGGIGWTGPTNCVAGAACSTQNPYYAQCL). 2 cysteine pairs are disulfide-bonded: C26–C43 and C37–C53. The tract at residues 57-106 (TATTSTTLTTTTRVTTTTTSTTSKSSSTGSTTTTKSTGTTTTSGSSTTIT) is thr-rich linker. Residues 68–107 (TRVTTTTTSTTSKSSSTGSTTTTKSTGTTTTSGSSTTITS) are disordered. Residues 107-468 (SAPSGNPFSG…QLLKNANPAF (362 aa)) form a catalytic region. D198 is an active-site residue. 2 cysteine pairs are disulfide-bonded: C199-C258 and C390-C437. D244 acts as the Proton donor in catalysis. Catalysis depends on D423, which acts as the Nucleophile.

This sequence belongs to the glycosyl hydrolase 6 (cellulase B) family.

The protein resides in the secreted. The catalysed reaction is Hydrolysis of (1-&gt;4)-beta-D-glucosidic linkages in cellulose and cellotetraose, releasing cellobiose from the non-reducing ends of the chains.. Its function is as follows. The biological conversion of cellulose to glucose generally requires three types of hydrolytic enzymes: (1) Endoglucanases which cut internal beta-1,4-glucosidic bonds; (2) Exocellobiohydrolases that cut the disaccharide cellobiose from the non-reducing end of the cellulose polymer chain; (3) Beta-1,4-glucosidases which hydrolyze the cellobiose and other short cello-oligosaccharides to glucose. The sequence is that of Probable 1,4-beta-D-glucan cellobiohydrolase C (cbhC) from Aspergillus terreus (strain NIH 2624 / FGSC A1156).